A 306-amino-acid chain; its full sequence is Protoheme IX farnesyltransferase (306 aa).

Transmembrane regions (helical) follow at residues 32-52 (VVALLVLTALVGMSLSVPGAL), 58-78 (IPAMLGIGLLSSAAAAINHIV), 103-123 (NAIVFATSIALLGFIILYALV), 126-146 (LTAFLTLAGLVGYSFVYTMYL), 153-173 (NITIGGLAGAIPPLLGWTAMT), 180-200 (ALLLVLIIFTWTPPHFWALAI), 227-247 (ILLYTVLLFVVCLLPYLVGMS), 249-269 (WLYLIGACSLNLIFFGYAWQL), and 278-298 (AMATFKFSIIHLMLLFIILLL).

It belongs to the UbiA prenyltransferase family. Protoheme IX farnesyltransferase subfamily.

It is found in the cell inner membrane. It carries out the reaction heme b + (2E,6E)-farnesyl diphosphate + H2O = Fe(II)-heme o + diphosphate. Its pathway is porphyrin-containing compound metabolism; heme O biosynthesis; heme O from protoheme: step 1/1. In terms of biological role, converts heme B (protoheme IX) to heme O by substitution of the vinyl group on carbon 2 of heme B porphyrin ring with a hydroxyethyl farnesyl side group. In Colwellia psychrerythraea (strain 34H / ATCC BAA-681) (Vibrio psychroerythus), this protein is Protoheme IX farnesyltransferase.